The primary structure comprises 103 residues: Histone H4 (103 aa).

The segment covering 1–14 (MTGRGKGGKGLGKG) has biased composition (gly residues). The disordered stretch occupies residues 1-20 (MTGRGKGGKGLGKGGAKRHR). An N6-acetyl-N6-methyllysine; alternate mark is found at K6 and K13. A DNA-binding region spans residues 17 to 21 (KRHRK).

Belongs to the histone H4 family. As to quaternary structure, the nucleosome is a histone octamer containing two molecules each of H2A, H2B, H3 and H4 assembled in one H3-H4 heterotetramer and two H2A-H2B heterodimers. The octamer wraps approximately 147 bp of DNA.

It localises to the nucleus. The protein localises to the chromosome. In terms of biological role, core component of nucleosome. Nucleosomes wrap and compact DNA into chromatin, limiting DNA accessibility to the cellular machineries which require DNA as a template. Histones thereby play a central role in transcription regulation, DNA repair, DNA replication and chromosomal stability. DNA accessibility is regulated via a complex set of post-translational modifications of histones, also called histone code, and nucleosome remodeling. This Myrmica ruginodis (Red ant) protein is Histone H4 (His4).